Here is a 105-residue protein sequence, read N- to C-terminus: ESAT-6-like protein EsxB (105 aa).

A disordered region spans residues 1–23 (MSQGFKTEADVMRNTAHRVDDTN). The span at 7 to 21 (TEADVMRNTAHRVDD) shows a compositional bias: basic and acidic residues.

This sequence belongs to the WXG100 family. CFP-10 subfamily. Forms a tight 1:1 complex with EsxB.

The polypeptide is ESAT-6-like protein EsxB (Corynebacterium diphtheriae (strain ATCC 700971 / NCTC 13129 / Biotype gravis)).